Consider the following 86-residue polypeptide: Exodeoxyribonuclease 7 small subunit (86 aa).

The protein belongs to the XseB family. Heterooligomer composed of large and small subunits.

It localises to the cytoplasm. It carries out the reaction Exonucleolytic cleavage in either 5'- to 3'- or 3'- to 5'-direction to yield nucleoside 5'-phosphates.. Its function is as follows. Bidirectionally degrades single-stranded DNA into large acid-insoluble oligonucleotides, which are then degraded further into small acid-soluble oligonucleotides. This Xanthomonas euvesicatoria pv. vesicatoria (strain 85-10) (Xanthomonas campestris pv. vesicatoria) protein is Exodeoxyribonuclease 7 small subunit.